A 194-amino-acid chain; its full sequence is Porimin (194 aa).

Residues 1 to 24 (MALCARAALLLGALQVLALPGAVA) form the signal peptide. Topologically, residues 25–151 (QETYAQGSPS…PTKGKGSKFD (127 aa)) are extracellular. N-linked (GlcNAc...) asparagine glycosylation is found at Asn-36, Asn-47, Asn-51, Asn-59, Asn-76, and Asn-114. Residues 88–124 (KVSTPGVSPHVTPSASKSTPKTSASPNSTQTSASMTT) form a disordered region. Residues 99–124 (TPSASKSTPKTSASPNSTQTSASMTT) show a composition bias toward low complexity. The helical transmembrane segment at 152 to 172 (AGSFVGGIVLTLGVLSILYIG) threads the bilayer. Residues 173–194 (CKMYYSRRGIRYRSIDEHDAII) are Cytoplasmic-facing. At Ser-186 the chain carries Phosphoserine.

It belongs to the CD164 family.

It is found in the membrane. Its function is as follows. Implicated in oncotic cell death, characterized by cell swelling, organelle swelling, vacuolization and increased membrane permeability. This Rattus norvegicus (Rat) protein is Porimin (Tmem123).